We begin with the raw amino-acid sequence, 692 residues long: Elongation factor G (692 aa).

The tr-type G domain occupies 8-282 (ENTRNIGIMA…AVLDYLPSPL (275 aa)). Residues 17–24 (AHIDAGKT), 81–85 (DTPGH), and 135–138 (NKMD) each bind GTP.

Belongs to the TRAFAC class translation factor GTPase superfamily. Classic translation factor GTPase family. EF-G/EF-2 subfamily.

The protein resides in the cytoplasm. Functionally, catalyzes the GTP-dependent ribosomal translocation step during translation elongation. During this step, the ribosome changes from the pre-translocational (PRE) to the post-translocational (POST) state as the newly formed A-site-bound peptidyl-tRNA and P-site-bound deacylated tRNA move to the P and E sites, respectively. Catalyzes the coordinated movement of the two tRNA molecules, the mRNA and conformational changes in the ribosome. This Halalkalibacterium halodurans (strain ATCC BAA-125 / DSM 18197 / FERM 7344 / JCM 9153 / C-125) (Bacillus halodurans) protein is Elongation factor G (fusA).